The chain runs to 309 residues: uncharacterized protein (309 aa).

The helical transmembrane segment at 23-39 (RFNVAIIGGTGGLGRAI) threads the bilayer.

Belongs to the NmrA-type oxidoreductase family.

The protein resides in the membrane. This is an uncharacterized protein from Saccharomyces cerevisiae (strain ATCC 204508 / S288c) (Baker's yeast).